Reading from the N-terminus, the 333-residue chain is Torsin-1A (333 aa).

A signal peptide spans 1 to 20 (MKLGRATLALLLLVPCVVRA). Positions 92-252 (KPKKPLTLSL…VSVFNNKNSG (161 aa)) are interaction with SNAPIN. 2 N-linked (GlcNAc...) asparagine glycosylation sites follow: asparagine 144 and asparagine 159. An interaction with KLC1 region spans residues 252–333 (GFWHSSLIDR…FTKLDYYLDD (82 aa)). The interaction with SYNE3 stretch occupies residues 313–333 (KVFSDKGCKTVFTKLDYYLDD).

It belongs to the ClpA/ClpB family. Torsin subfamily. As to quaternary structure, homohexamer. Interacts with TOR1B; the interaction may be specific of neural tissues. Interacts (ATP-bound) with TOR1AIP1 and TOR1AIP2; the interactions induce ATPase activity. Interacts with KLHL14; preferentially when ATP-free. Interacts with KLC1 (via TPR repeats); the interaction associates TOR1A with the kinesin oligomeric complex. Interacts with COPS4; the interaction associates TOR1A with the CSN complex. Interacts with SNAPIN; the interaction is direct and associates SNAPIN with the CSN complex. Interacts with STON2. Interacts (ATP-bound) with SYNE3 (via KASH domain); the interaction is required for SYNE3 nuclear envelope localization. Interacts with VIM; the interaction associates TOR1A with the cytoskeleton. Interacts with PLEC. Interacts (ATP-bound) with SLC6A3; regulates SLC6A3 transport to the plasma membrane. In terms of processing, N-glycosylated. Expressed in brain (at protein level).

It is found in the endoplasmic reticulum lumen. Its subcellular location is the nucleus inner membrane. The protein localises to the cell projection. The protein resides in the growth cone. It localises to the cytoplasmic vesicle membrane. It is found in the cytoplasmic vesicle. Its subcellular location is the secretory vesicle. The protein localises to the synaptic vesicle. It carries out the reaction ATP + H2O = ADP + phosphate + H(+). Protein with chaperone functions important for the control of protein folding, processing, stability and localization as well as for the reduction of misfolded protein aggregates. Involved in the regulation of synaptic vesicle recycling, controls STON2 protein stability in collaboration with the COP9 signalosome complex (CSN). In the nucleus, may link the cytoskeleton with the nuclear envelope, this mechanism seems to be crucial for the control of nuclear polarity, cell movement and, specifically in neurons, nuclear envelope integrity. Participates in the cellular trafficking and may regulate the subcellular location of multipass membrane proteins such as the dopamine transporter SLC6A3, leading to the modulation of dopamine neurotransmission. In the endoplasmic reticulum, plays a role in the quality control of protein folding by increasing clearance of misfolded proteins such as SGCE variants or holding them in an intermediate state for proper refolding. May have a redundant function with TOR1B in non-neural tissues. This Rattus norvegicus (Rat) protein is Torsin-1A (Tor1a).